The following is an 831-amino-acid chain: Phenylalanine--tRNA ligase beta subunit (831 aa).

The 116-residue stretch at 42 to 157 folds into the tRNA-binding domain; the sequence is ADISGPIVVG…GFAEPGTKAD (116 aa). The region spanning 408 to 483 is the B5 domain; the sequence is VPREPIVVRA…RNEGYENIPA (76 aa). Mg(2+) is bound by residues Asp461, Asp467, Glu470, and Glu471. One can recognise an FDX-ACB domain in the interval 737 to 830; sequence STYPVATQDV…AAERTGAVLR (94 aa).

It belongs to the phenylalanyl-tRNA synthetase beta subunit family. Type 1 subfamily. Tetramer of two alpha and two beta subunits. The cofactor is Mg(2+).

It is found in the cytoplasm. It carries out the reaction tRNA(Phe) + L-phenylalanine + ATP = L-phenylalanyl-tRNA(Phe) + AMP + diphosphate + H(+). The sequence is that of Phenylalanine--tRNA ligase beta subunit from Thermobifida fusca (strain YX).